A 202-amino-acid chain; its full sequence is Ion-translocating oxidoreductase complex subunit G (202 aa).

A helical membrane pass occupies residues 11-31 (ACLMGFFSFFSLSSVIFVKNI). Thr176 carries the FMN phosphoryl threonine modification.

This sequence belongs to the RnfG family. The complex is composed of six subunits: RnfA, RnfB, RnfC, RnfD, RnfE and RnfG. Requires FMN as cofactor.

It is found in the cell inner membrane. In terms of biological role, part of a membrane-bound complex that couples electron transfer with translocation of ions across the membrane. The chain is Ion-translocating oxidoreductase complex subunit G from Buchnera aphidicola subsp. Schizaphis graminum (strain Sg).